Here is a 316-residue protein sequence, read N- to C-terminus: ATP synthase gamma chain (316 aa).

Belongs to the ATPase gamma chain family. As to quaternary structure, F-type ATPases have 2 components, CF(1) - the catalytic core - and CF(0) - the membrane proton channel. CF(1) has five subunits: alpha(3), beta(3), gamma(1), delta(1), epsilon(1). CF(0) has three main subunits: a, b and c.

It is found in the cellular thylakoid membrane. In terms of biological role, produces ATP from ADP in the presence of a proton gradient across the membrane. The gamma chain is believed to be important in regulating ATPase activity and the flow of protons through the CF(0) complex. In Prochlorococcus marinus (strain MIT 9303), this protein is ATP synthase gamma chain.